The primary structure comprises 779 residues: Nucleolar complex protein 3 homolog (779 aa).

Disordered stretches follow at residues 1-20 and 100-189; these read MGFASASREEKLKMMKTNKT and NAKR…SHLS. Residues 114-124 show a composition bias toward acidic residues; sequence DSDEDEDEDDV. A compositionally biased stretch (basic and acidic residues) spans 136 to 160; the sequence is EEGHEELLPIKLKDGTLIRPTREKE. Acidic residues predominate over residues 161 to 178; the sequence is VEEQEEEEKSDIDEGEED. Residues 434-474 adopt a coiled-coil conformation; the sequence is AKKYQIKKERASKTAKKYKKQLARLEADLLEVEAEESLTKK.

Belongs to the CBF/MAK21 family.

It is found in the nucleus. It localises to the nucleolus. The chain is Nucleolar complex protein 3 homolog from Caenorhabditis briggsae.